We begin with the raw amino-acid sequence, 542 residues long: Chaperonin GroEL 2 (542 aa).

Residues 30–33 (TLGP), lysine 51, 87–91 (DGTTT), glycine 415, and aspartate 496 contribute to the ATP site.

The protein belongs to the chaperonin (HSP60) family. As to quaternary structure, forms a cylinder of 14 subunits composed of two heptameric rings stacked back-to-back. Interacts with the co-chaperonin GroES.

The protein localises to the cytoplasm. It catalyses the reaction ATP + H2O + a folded polypeptide = ADP + phosphate + an unfolded polypeptide.. Its function is as follows. Together with its co-chaperonin GroES, plays an essential role in assisting protein folding. The GroEL-GroES system forms a nano-cage that allows encapsulation of the non-native substrate proteins and provides a physical environment optimized to promote and accelerate protein folding. This chain is Chaperonin GroEL 2, found in Chelativorans sp. (strain BNC1).